A 297-amino-acid polypeptide reads, in one-letter code: Calponin-1 (297 aa).

One can recognise a Calponin-homology (CH) domain in the interval 28–131 (HQREQELREW…STLLALASMA (104 aa)). Calponin-like repeat units lie at residues 164-189 (IGLQ…RHLY), 204-229 (ISLQ…RQIF), and 243-268 (VSLQ…RQVY). Thr-170 bears the Phosphothreonine; by ROCK2 mark. Residue Ser-175 is modified to Phosphoserine; by ROCK2. A phosphothreonine; by ROCK2 mark is found at Thr-180 and Thr-184. Thr-259 carries the phosphothreonine; by ROCK2 modification.

Belongs to the calponin family. As to quaternary structure, part of cGMP kinase signaling complex at least composed of ACTA2/alpha-actin, CNN1/calponin H1, PLN/phospholamban, PRKG1 and ITPR1. In terms of tissue distribution, smooth muscle, and tissues containing significant amounts of smooth muscle.

Functionally, thin filament-associated protein that is implicated in the regulation and modulation of smooth muscle contraction. It is capable of binding to actin, calmodulin and tropomyosin. The interaction of calponin with actin inhibits the actomyosin Mg-ATPase activity. This chain is Calponin-1 (CNN1), found in Homo sapiens (Human).